Consider the following 1953-residue polypeptide: TATA-binding protein-associated factor mot1 (1953 aa).

One copy of the HEAT 1 repeat lies at 36 to 74; that stretch reads PDELYNLLGRVVPYLKSKNWDTRVAAAKAIGGIVENVPV. Residues 79–141 are disordered; it reads RTSPVKKEET…KLEEERLSTR (63 aa). Positions 98–108 are enriched in basic and acidic residues; sequence TEEKPFIKTEE. Residues 113–130 show a composition bias toward low complexity; sequence SSQSQVVVSSNLTSNSEV. Basic and acidic residues predominate over residues 131–141; that stretch reads SKLEEERLSTR. At Ser-144 the chain carries Phosphoserine. The interval 240–278 is disordered; sequence DNVGSNSKGSPTTSIPEHKTSINNNKPEDTPTPSENVHL. Residues 242-276 are compositionally biased toward polar residues; it reads VGSNSKGSPTTSIPEHKTSINNNKPEDTPTPSENV. HEAT repeat units lie at residues 358–396, 513–551, 554–592, and 608–646; these read VWPF…YAGF, SDYL…KLVQ, LSSC…LCSF, and EFSF…VQTS. Disordered stretches follow at residues 730 to 762 and 1078 to 1103; these read SGQP…KDDP and DDND…KSSL. HEAT repeat units lie at residues 1191 to 1229 and 1270 to 1311; these read QSEI…SNAA and VRIL…LVPL. The Helicase ATP-binding domain maps to 1370 to 1543; sequence AFLNKYELHG…WSLFDFLMPG (174 aa). 1383-1390 contributes to the ATP binding site; it reads DDMGLGKT. The DEGH box motif lies at 1494–1497; it reads DEGH. One copy of the HEAT 8 repeat lies at 1580-1623; the sequence is EAIHKQVLPFMLRRLKEDVLADLPPKIIQDYYCDMSDLQRKLLN. The Helicase C-terminal domain occupies 1725–1877; that stretch reads GIDSALTNAV…STVVNQQNAG (153 aa). Residues 1901-1920 are disordered; that stretch reads QNIDKEESEDAAGRGLSGTS.

Belongs to the SNF2/RAD54 helicase family. Forms a complex with TBP which binds TATA DNA.

It is found in the nucleus. In terms of biological role, regulates transcription in association with TATA binding protein (TBP). Removes TBP from the TATA box via its ATPase activity. This Schizosaccharomyces pombe (strain 972 / ATCC 24843) (Fission yeast) protein is TATA-binding protein-associated factor mot1.